The sequence spans 659 residues: ATP-binding cassette sub-family D member 3 (659 aa).

The interaction with PEX19 stretch occupies residues 2–61 (AAFSKYLTARNSSLAGAAFLLFCLLHKRRRALGLHGKKSGKPPLQNNEKEGKKERAVVDK). N-linked (GlcNAc...) asparagine glycosylation occurs at Asn-12. An N6-acetyllysine modification is found at Lys-61. A helical membrane pass occupies residues 84–104 (GYLILIAVMLVSRTYCDVWMI). Positions 85–372 (YLILIAVMLV…MLLRMSQALG (288 aa)) constitute an ABC transmembrane type-1 domain. Residue Asn-106 is glycosylated (N-linked (GlcNAc...) asparagine). Residues 126–146 (LFNFIAAMPLISLVNNFLKYG) form a helical membrane-spanning segment. A glycan (N-linked (GlcNAc...) asparagine) is linked at Asn-206. A helical transmembrane segment spans residues 224 to 244 (AIGAQGPASMMAYLLVSGLFL). N6-acetyllysine is present on Lys-260. The helical transmembrane segment at 313 to 333 (MGFIDSIIAKYIATVVGYLVV) threads the bilayer. Lys-399 is subject to N6-acetyllysine. Ser-424 is modified (phosphoserine). The region spanning 434–659 (INADNIIKFD…ITEDTVEFGS (226 aa)) is the ABC transporter domain. Residue 473–480 (GPNGCGKS) coordinates ATP. Lys-533 carries the N6-acetyllysine modification. The residue at position 659 (Ser-659) is a Phosphoserine.

The protein belongs to the ABC transporter superfamily. ABCD family. Peroxisomal fatty acyl CoA transporter (TC 3.A.1.203) subfamily. As to quaternary structure, homodimers. Can form heterodimers with ABCD1 and ABCD2. Dimerization is necessary to form an active transporter. Interacts with PEX19; mediates the targeting of ABCD3 to peroxisomes. In terms of processing, ubiquitinated by PEX2 during pexophagy in response to starvation, leading to its degradation.

It is found in the peroxisome membrane. It catalyses the reaction a very long-chain fatty acyl-CoA + H2O = a very long-chain fatty acid + CoA + H(+). The enzyme catalyses a very long-chain fatty acid(in) + ATP + H2O = a very long-chain fatty acid(out) + ADP + phosphate + H(+). The catalysed reaction is a long-chain fatty acyl-CoA + H2O = a long-chain fatty acid + CoA + H(+). It carries out the reaction a long-chain fatty acid(in) + ATP + H2O = a long-chain fatty acid(out) + ADP + phosphate + H(+). It catalyses the reaction pristanoyl-CoA + H2O = 2,6,10,14-tetramethylpentadecanoate + CoA + H(+). The enzyme catalyses 2,6,10,14-tetramethylpentadecanoate(in) + ATP + H2O = 2,6,10,14-tetramethylpentadecanoate(out) + ADP + phosphate + H(+). The catalysed reaction is hexadecanedioyl-CoA + H2O = hexadecanedioate + CoA + H(+). It carries out the reaction hexadecanedioate(in) + ATP + H2O = hexadecanedioate(out) + ADP + phosphate + H(+). It catalyses the reaction (5Z,8Z,11Z,14Z,17Z)-eicosapentaenoyl-CoA + H2O = (5Z,8Z,11Z,14Z,17Z)-eicosapentaenoate + CoA + H(+). The enzyme catalyses (5Z,8Z,11Z,14Z,17Z)-eicosapentaenoate(in) + ATP + H2O = (5Z,8Z,11Z,14Z,17Z)-eicosapentaenoate(out) + ADP + phosphate + H(+). The catalysed reaction is (4Z,7Z,10Z,13Z,16Z,19Z)-docosahexaenoyl-CoA + H2O = (4Z,7Z,10Z,13Z,16Z,19Z)-docosahexaenoate + CoA + H(+). It carries out the reaction (4Z,7Z,10Z,13Z,16Z,19Z)-docosahexaenoate(in) + ATP + H2O = (4Z,7Z,10Z,13Z,16Z,19Z)-docosahexaenoate(out) + ADP + phosphate + H(+). Its function is as follows. Broad substrate specificity ATP-dependent transporter of the ATP-binding cassette (ABC) family that catalyzes the transport of long-chain fatty acids (LCFA)-CoA, dicarboxylic acids-CoA, long-branched-chain fatty acids-CoA and bile acids from the cytosol to the peroxisome lumen for beta-oxydation. Has fatty acyl-CoA thioesterase and ATPase activities. Probably hydrolyzes fatty acyl-CoAs into free fatty acids prior to their ATP-dependent transport into peroxisomes. Thus, play a role in regulation of LCFAs and energy metabolism namely, in the degradation and biosynthesis of fatty acids by beta-oxidation. This chain is ATP-binding cassette sub-family D member 3 (Abcd3), found in Rattus norvegicus (Rat).